Reading from the N-terminus, the 284-residue chain is Diaminopimelate epimerase (284 aa).

Substrate-binding residues include Asn-20, Gln-53, and Asn-73. Residue Cys-82 is the Proton donor of the active site. Substrate is bound by residues 83 to 84 (GN), Asn-167, Asn-200, and 218 to 219 (ER). The active-site Proton acceptor is the Cys-227. 228-229 (GS) is a binding site for substrate.

It belongs to the diaminopimelate epimerase family. In terms of assembly, homodimer.

It localises to the cytoplasm. The catalysed reaction is (2S,6S)-2,6-diaminopimelate = meso-2,6-diaminopimelate. The protein operates within amino-acid biosynthesis; L-lysine biosynthesis via DAP pathway; DL-2,6-diaminopimelate from LL-2,6-diaminopimelate: step 1/1. Functionally, catalyzes the stereoinversion of LL-2,6-diaminopimelate (L,L-DAP) to meso-diaminopimelate (meso-DAP), a precursor of L-lysine and an essential component of the bacterial peptidoglycan. The protein is Diaminopimelate epimerase of Xanthomonas oryzae pv. oryzae (strain MAFF 311018).